A 565-amino-acid polypeptide reads, in one-letter code: Proline--tRNA ligase (565 aa).

It belongs to the class-II aminoacyl-tRNA synthetase family. ProS type 1 subfamily. In terms of assembly, homodimer.

It localises to the cytoplasm. It catalyses the reaction tRNA(Pro) + L-proline + ATP = L-prolyl-tRNA(Pro) + AMP + diphosphate. In terms of biological role, catalyzes the attachment of proline to tRNA(Pro) in a two-step reaction: proline is first activated by ATP to form Pro-AMP and then transferred to the acceptor end of tRNA(Pro). As ProRS can inadvertently accommodate and process non-cognate amino acids such as alanine and cysteine, to avoid such errors it has two additional distinct editing activities against alanine. One activity is designated as 'pretransfer' editing and involves the tRNA(Pro)-independent hydrolysis of activated Ala-AMP. The other activity is designated 'posttransfer' editing and involves deacylation of mischarged Ala-tRNA(Pro). The misacylated Cys-tRNA(Pro) is not edited by ProRS. This is Proline--tRNA ligase from Lactobacillus delbrueckii subsp. bulgaricus (strain ATCC 11842 / DSM 20081 / BCRC 10696 / JCM 1002 / NBRC 13953 / NCIMB 11778 / NCTC 12712 / WDCM 00102 / Lb 14).